Here is a 344-residue protein sequence, read N- to C-terminus: MEEKLKQLEQEALEQVEAASSLKVVNDIRVQYLGKKGPITEVLRGMGKLSAEERPKMGALANEVRERIANAIADKNEKLEEEEMKQKLAGQTIDVTLPGNPVAVGGRHPLTVVIEEIEDLFIGMGYTVEEGPEVETDYYNFESLNLPKEHPARDMQDSFYITEETLMRTQTSPVQTRTMEKHEGKGPVKIICPGKVYRRDNDDATHSHQFMQIEGLVVDKNISMSDLKGTLELVAKKMFGQDREIRLRPSFFPFTEPSVEVDVTCFKCGGNGCSVCKGTGWIEILGAGMVHPNVLKMAGFDPKEYQGFAFGMGVERIAMLKYGIDDIRHFYTNDVRFISQFKQA.

Residue glutamate 256 participates in Mg(2+) binding.

It belongs to the class-II aminoacyl-tRNA synthetase family. Phe-tRNA synthetase alpha subunit type 1 subfamily. As to quaternary structure, tetramer of two alpha and two beta subunits. It depends on Mg(2+) as a cofactor.

It localises to the cytoplasm. It catalyses the reaction tRNA(Phe) + L-phenylalanine + ATP = L-phenylalanyl-tRNA(Phe) + AMP + diphosphate + H(+). This is Phenylalanine--tRNA ligase alpha subunit (pheS) from Bacillus subtilis (strain 168).